The following is a 767-amino-acid chain: DNA topoisomerase 1 (767 aa).

Residues 1 to 23 are compositionally biased toward basic and acidic residues; sequence MSGDHLHNDSQIEADFRLNDSHK. The tract at residues 1–200 is disordered; it reads MSGDHLHNDS…DNKKKKAKKE (200 aa). An N-acetylserine modification is found at S2. S2 and S10 each carry phosphoserine. Basic residues predominate over residues 24-39; the sequence is HKDKHKDREHRHKEHK. Residues 40–110 show a composition bias toward basic and acidic residues; that stretch reads KDKDKDREKS…DAKIKKEKEN (71 aa). Phosphoserine is present on S59. K103 participates in a covalent cross-link: Glycyl lysine isopeptide (Lys-Gly) (interchain with G-Cter in SUMO2). K105 participates in a covalent cross-link: Glycyl lysine isopeptide (Lys-Gly) (interchain with G-Cter in SUMO); alternate. K105 is covalently cross-linked (Glycyl lysine isopeptide (Lys-Gly) (interchain with G-Cter in SUMO2); alternate). At S114 the chain carries Phosphoserine. K119 participates in a covalent cross-link: Glycyl lysine isopeptide (Lys-Gly) (interchain with G-Cter in SUMO); alternate. K119 is covalently cross-linked (Glycyl lysine isopeptide (Lys-Gly) (interchain with G-Cter in SUMO2); alternate). K119 participates in a covalent cross-link: Glycyl lysine isopeptide (Lys-Gly) (interchain with G-Cter in SUMO1); alternate. Residues 131–168 show a composition bias toward basic and acidic residues; the sequence is PKEDIKPLKRPRDEDDADYKPKKIKTEDIKKEKKRKLE. Residues K136 and K150 each participate in a glycyl lysine isopeptide (Lys-Gly) (interchain with G-Cter in SUMO2) cross-link. K155 participates in a covalent cross-link: Glycyl lysine isopeptide (Lys-Gly) (interchain with G-Cter in SUMO); alternate. A Glycyl lysine isopeptide (Lys-Gly) (interchain with G-Cter in SUMO2); alternate cross-link involves residue K155. Glycyl lysine isopeptide (Lys-Gly) (interchain with G-Cter in SUMO2) cross-links involve residues K160 and K166. K174 is covalently cross-linked (Glycyl lysine isopeptide (Lys-Gly) (interchain with G-Cter in SUMO2); alternate). K174 is modified (N6-acetyllysine; alternate). The segment covering 181–200 has biased composition (basic and acidic residues); that stretch reads KDKDKKVAEPDNKKKKAKKE. K206 is covalently cross-linked (Glycyl lysine isopeptide (Lys-Gly) (interchain with G-Cter in SUMO2)). K282 carries the post-translational modification N6-acetyllysine. A Glycyl lysine isopeptide (Lys-Gly) (interchain with G-Cter in SUMO2) cross-link involves residue K338. Interaction with DNA stretches follow at residues 427–428 and 490–495; these read KY and RAGNEK. In terms of domain architecture, Topo IB-type catalytic spans 434–767; that stretch reads SSRIKGEKDW…IDMTDEDYEF (334 aa). S508 is subject to Phosphoserine; by CK2. Residue K551 forms a Glycyl lysine isopeptide (Lys-Gly) (interchain with G-Cter in SUMO2) linkage. Positions 587-589 are interaction with DNA; sequence TAK. Residues K644, K702, and K714 each participate in a glycyl lysine isopeptide (Lys-Gly) (interchain with G-Cter in SUMO2) cross-link. The O-(3'-phospho-DNA)-tyrosine intermediate role is filled by Y725.

This sequence belongs to the type IB topoisomerase family. In terms of assembly, monomer. Interacts with ERCC6. Interacts with TPRN; TPRN interacts with a number of DNA damage response proteins, is recruited to sites of DNA damage and may play a role in DNA damage repair. Sumoylated. Lys-119 is the main site of sumoylation. Sumoylation plays a role in partitioning TOP1 between nucleoli and nucleoplasm. Levels are dramatically increased on camptothecin (CPT) treatment. In terms of processing, phosphorylation at Ser-508 by CK2 increases binding to supercoiled DNA and sensitivity to camptothecin.

It is found in the nucleus. The protein localises to the nucleolus. Its subcellular location is the nucleoplasm. The enzyme catalyses ATP-independent breakage of single-stranded DNA, followed by passage and rejoining.. In terms of biological role, releases the supercoiling and torsional tension of DNA introduced during the DNA replication and transcription by transiently cleaving and rejoining one strand of the DNA duplex. Introduces a single-strand break via transesterification at a target site in duplex DNA. The scissile phosphodiester is attacked by the catalytic tyrosine of the enzyme, resulting in the formation of a DNA-(3'-phosphotyrosyl)-enzyme intermediate and the expulsion of a 5'-OH DNA strand. The free DNA strand then rotates around the intact phosphodiester bond on the opposing strand, thus removing DNA supercoils. Finally, in the religation step, the DNA 5'-OH attacks the covalent intermediate to expel the active-site tyrosine and restore the DNA phosphodiester backbone. Regulates the alternative splicing of tissue factor (F3) pre-mRNA in endothelial cells. Involved in the circadian transcription of the core circadian clock component BMAL1 by altering the chromatin structure around the ROR response elements (ROREs) on the BMAL1 promoter. The protein is DNA topoisomerase 1 (Top1) of Rattus norvegicus (Rat).